The following is a 417-amino-acid chain: Gamma-glutamyl phosphate reductase (417 aa).

Belongs to the gamma-glutamyl phosphate reductase family.

It localises to the cytoplasm. It carries out the reaction L-glutamate 5-semialdehyde + phosphate + NADP(+) = L-glutamyl 5-phosphate + NADPH + H(+). Its pathway is amino-acid biosynthesis; L-proline biosynthesis; L-glutamate 5-semialdehyde from L-glutamate: step 2/2. Its function is as follows. Catalyzes the NADPH-dependent reduction of L-glutamate 5-phosphate into L-glutamate 5-semialdehyde and phosphate. The product spontaneously undergoes cyclization to form 1-pyrroline-5-carboxylate. This chain is Gamma-glutamyl phosphate reductase, found in Escherichia coli (strain 55989 / EAEC).